The sequence spans 182 residues: Small ribosomal subunit protein uS4c (182 aa).

One can recognise an S4 RNA-binding domain in the interval 82-143 (MRLDNILFRL…KQRSKALIQN (62 aa)).

Belongs to the universal ribosomal protein uS4 family. Part of the 30S ribosomal subunit. Contacts protein S5. The interaction surface between S4 and S5 is involved in control of translational fidelity.

It localises to the plastid. The protein localises to the chloroplast. Its function is as follows. One of the primary rRNA binding proteins, it binds directly to 16S rRNA where it nucleates assembly of the body of the 30S subunit. In terms of biological role, with S5 and S12 plays an important role in translational accuracy. This chain is Small ribosomal subunit protein uS4c (rps4), found in Libertia formosa (Snowy mermaid).